Reading from the N-terminus, the 108-residue chain is Transmembrane protein 213 (108 aa).

An N-terminal signal peptide occupies residues 1–27 (MKRLHLAPWTSLVLGLAFLSFHPVYLA). Topologically, residues 28–71 (EASSGSNSTSTVHHPENLETLEQCPNVDFCPQAARCCHTGVDEY) are extracellular. The N-linked (GlcNAc...) asparagine glycan is linked to N34. Residues 72 to 92 (GWIAAAVGWSLLFLTLILLCV) traverse the membrane as a helical segment. At 93–108 (DKLMKLTPDESKDLQA) the chain is on the cytoplasmic side.

It localises to the membrane. This is Transmembrane protein 213 (TMEM213) from Bos taurus (Bovine).